Here is a 138-residue protein sequence, read N- to C-terminus: uncharacterized protein (138 aa).

Residues 1-27 (MEGELIENNGLDIYDTSETPKKRGRPA) form a disordered region.

This is an uncharacterized protein from Escherichia coli (strain K12).